The chain runs to 177 residues: Large ribosomal subunit protein uL10 (177 aa).

The protein belongs to the universal ribosomal protein uL10 family. In terms of assembly, part of the ribosomal stalk of the 50S ribosomal subunit. The N-terminus interacts with L11 and the large rRNA to form the base of the stalk. The C-terminus forms an elongated spine to which L12 dimers bind in a sequential fashion forming a multimeric L10(L12)X complex.

Its function is as follows. Forms part of the ribosomal stalk, playing a central role in the interaction of the ribosome with GTP-bound translation factors. The sequence is that of Large ribosomal subunit protein uL10 from Kocuria rhizophila (strain ATCC 9341 / DSM 348 / NBRC 103217 / DC2201).